We begin with the raw amino-acid sequence, 1435 residues long: DNA polymerase III PolC-type (1435 aa).

The Exonuclease domain maps to 404–562 (YVVYDIETTG…YDSSVLTNIF (159 aa)).

The protein belongs to the DNA polymerase type-C family. PolC subfamily.

The protein resides in the cytoplasm. The enzyme catalyses DNA(n) + a 2'-deoxyribonucleoside 5'-triphosphate = DNA(n+1) + diphosphate. In terms of biological role, required for replicative DNA synthesis. This DNA polymerase also exhibits 3' to 5' exonuclease activity. This is DNA polymerase III PolC-type from Mycoplasmopsis pulmonis (strain UAB CTIP) (Mycoplasma pulmonis).